The chain runs to 305 residues: Major fimbrium anchoring subunit FimB (305 aa).

Residues 1–22 form the signal peptide; it reads MNDAKKYIVSVLILLVAGMFGG. The N-palmitoyl cysteine moiety is linked to residue C23. C23 carries the S-diacylglycerol cysteine lipid modification.

The protein belongs to the bacteroidetes fimbrillin superfamily. FimB/Mfa2 family. FimB is not part of the fimbrium itself, but anchors the fimbrium in the outer membrane. Linear, head-to-tail oligomerization of fimbrial subunits mediates assembly of the fimbrium stalk, while the minor components FimC, FimD and FimE probably form the fimbrium tip. The anchoring subunit FimB limits fimbrium length and is important for solid fimbrium attachment to the outer membrane. In its absence, the major fimbriae become very long and are easily detached from the membrane.

It localises to the cell outer membrane. In terms of biological role, anchoring subunit of the major fimbriae. Regulates fimbrial length. These filamentous pili are attached to the cell surface; they mediate biofilm formation, adhesion onto host cells and onto other bacteria that are part of the oral microbiome. Fimbriae of P.gingivalis are major virulence factors. The sequence is that of Major fimbrium anchoring subunit FimB from Porphyromonas gingivalis (Bacteroides gingivalis).